A 278-amino-acid polypeptide reads, in one-letter code: MSRPERWTTAVLDVEAPGGLAVVQGDQGFLLDANGVMFPRGWLAGQDLPVQSEHGIGYFEGEPVYLLVLERSVAVEGCAWQGLRQFMLEGDFAVFQMLGYAAQVSTWAREHRFCGACGRATVQIRGERAMFCEHDNLRLYPRISPSMIVLVTRGDEILLARSPRFVTGMYSALAGFVEPGESAEDCVHREVMEEVQVRIKNLRYRGSQCWPFPHSMMLGFHAEYESGEIVPQAEEIEDARWFHVDDLPPLPANRSIARYLIEAYLAERSGAPEPVLPG.

Arg84 is a substrate binding site. 2 residues coordinate Zn(2+): Cys114 and Cys117. Substrate is bound at residue Glu127. Zn(2+) is bound at residue Cys132. Position 140 (Tyr140) interacts with substrate. Residues 141–264 (PRISPSMIVL…SIARYLIEAY (124 aa)) form the Nudix hydrolase domain. 3 residues coordinate a divalent metal cation: Ala174, Glu190, and Glu194. Residues 175-196 (GFVEPGESAEDCVHREVMEEVQ) carry the Nudix box motif. A substrate-binding site is contributed by 208-215 (QCWPFPHS). Glu235 contributes to the a divalent metal cation binding site. A substrate-binding site is contributed by Ala257.

Belongs to the Nudix hydrolase family. NudC subfamily. In terms of assembly, homodimer. It depends on Mg(2+) as a cofactor. The cofactor is Mn(2+). Requires Zn(2+) as cofactor.

The catalysed reaction is a 5'-end NAD(+)-phospho-ribonucleoside in mRNA + H2O = a 5'-end phospho-adenosine-phospho-ribonucleoside in mRNA + beta-nicotinamide D-ribonucleotide + 2 H(+). It carries out the reaction NAD(+) + H2O = beta-nicotinamide D-ribonucleotide + AMP + 2 H(+). It catalyses the reaction NADH + H2O = reduced beta-nicotinamide D-ribonucleotide + AMP + 2 H(+). In terms of biological role, mRNA decapping enzyme that specifically removes the nicotinamide adenine dinucleotide (NAD) cap from a subset of mRNAs by hydrolyzing the diphosphate linkage to produce nicotinamide mononucleotide (NMN) and 5' monophosphate mRNA. The NAD-cap is present at the 5'-end of some mRNAs and stabilizes RNA against 5'-processing. Has preference for mRNAs with a 5'-end purine. Catalyzes the hydrolysis of a broad range of dinucleotide pyrophosphates. This chain is NAD-capped RNA hydrolase NudC, found in Pseudomonas syringae pv. syringae (strain B728a).